The sequence spans 833 residues: Copper-exporting P-type ATPase (833 aa).

HMA domains lie at 3-64 and 98-161; these read QTID…YGAT and ESQQ…YGAE. Cu(+)-binding residues include Cys-14, Cys-17, Cys-109, and Cys-112. The next 6 helical transmembrane spans lie at 186 to 206, 217 to 237, 253 to 273, 283 to 303, 437 to 457, and 463 to 483; these read WQAI…MIGD, LWLA…GHFY, TLVA…NLWP, LYYE…MLEA, AVFV…WYFF, and IVYT…CALG. The active-site 4-aspartylphosphate intermediate is Asp-522. Mg(2+) is bound by residues Asp-719 and Asp-723. 2 helical membrane passes run 778-798 and 800-820; these read LGAF…LWPF and GTLL…ITVV.

Belongs to the cation transport ATPase (P-type) (TC 3.A.3) family. Type IB subfamily.

Its subcellular location is the cell inner membrane. The protein resides in the cytoplasm. The enzyme catalyses Cu(+)(in) + ATP + H2O = Cu(+)(out) + ADP + phosphate + H(+). Functionally, involved in Cu(+) export. Essential for copper tolerance under both aerobic and anaerobic conditions. Probably also encodes a cytoplasmic copper chaperone CopA(Z) that is produced by programmed ribosomal frameshifting. The sequence is that of Copper-exporting P-type ATPase (copA) from Salmonella typhimurium (strain LT2 / SGSC1412 / ATCC 700720).